A 419-amino-acid chain; its full sequence is MYEPTLTVESFDSELAGAIRDERRRQEHHVELIASENYVSPRVLELQGSVLTNKYAEGYPGRRYYGGCEFVDIAEQLAIDRAKELFGADYANVQPHSGSQANAEAYMALMNPGDTLLAMDLSHGGHLTHGSPVSFSGKFYKAVHYGLNAHGDIDYEQAAQLAQEHKPKVILAGFSAFSGIVDWQRFREIADSVNAYFMTDIAHVAGLVAAGVYPSPVQIADVTTTTTHKTLRGPRAGLILAKANPELEKRLNSAVFPGSQGGPLMHIIAAKAVAFKEAMQPEFKTYAQQILKNAKAMAEVMKERGYTIVSGGTQNHLFLVSLLDKNISGKEAEAALGRANITVNKNTVPGETRSPFVTSGLRIGTPAITTRGFKEKEASQLAHWVCDILDDIHNEKVIADVKQKADELCGKFPVYQELD.

(6S)-5,6,7,8-tetrahydrofolate is bound by residues L121 and 125-127 (GHL). K229 bears the N6-(pyridoxal phosphate)lysine mark. 354 to 356 (SPF) contributes to the (6S)-5,6,7,8-tetrahydrofolate binding site.

It belongs to the SHMT family. As to quaternary structure, homodimer. Requires pyridoxal 5'-phosphate as cofactor.

Its subcellular location is the cytoplasm. It catalyses the reaction (6R)-5,10-methylene-5,6,7,8-tetrahydrofolate + glycine + H2O = (6S)-5,6,7,8-tetrahydrofolate + L-serine. It participates in one-carbon metabolism; tetrahydrofolate interconversion. It functions in the pathway amino-acid biosynthesis; glycine biosynthesis; glycine from L-serine: step 1/1. In terms of biological role, catalyzes the reversible interconversion of serine and glycine with tetrahydrofolate (THF) serving as the one-carbon carrier. This reaction serves as the major source of one-carbon groups required for the biosynthesis of purines, thymidylate, methionine, and other important biomolecules. Also exhibits THF-independent aldolase activity toward beta-hydroxyamino acids, producing glycine and aldehydes, via a retro-aldol mechanism. In Coxiella burnetii (strain CbuK_Q154) (Coxiella burnetii (strain Q154)), this protein is Serine hydroxymethyltransferase.